The primary structure comprises 127 residues: NHP2-like protein 1 homolog (127 aa).

Belongs to the eukaryotic ribosomal protein eL8 family.

Its subcellular location is the nucleus. It is found in the nucleolus. Its function is as follows. Binds to the 5'-stem-loop of U4 snRNA and may play a role in the late stage of spliceosome assembly. The protein undergoes a conformational change upon RNA-binding. The protein is NHP2-like protein 1 homolog (hoip) of Drosophila melanogaster (Fruit fly).